The primary structure comprises 204 residues: Synaptosomal-associated protein 25-A (204 aa).

A compositionally biased stretch (basic and acidic residues) spans 1–11 (MAEDADMRNEL). Residues 1-25 (MAEDADMRNELSDMQQRADQLADES) form a disordered region. 2 t-SNARE coiled-coil homology domains span residues 19-81 (DQLA…LNDL) and 138-200 (DARE…ATKM).

The protein belongs to the SNAP-25 family.

The protein resides in the synapse. It localises to the synaptosome. Its subcellular location is the cell membrane. May play an important role in the synaptic function of specific neuronal systems. Associates with proteins involved in vesicle docking and membrane fusion. This chain is Synaptosomal-associated protein 25-A (snap25a), found in Carassius auratus (Goldfish).